Consider the following 241-residue polypeptide: 2,3,4,5-tetrahydropyridine-2,6-dicarboxylate N-acetyltransferase (241 aa).

This sequence belongs to the transferase hexapeptide repeat family. DapH subfamily.

The enzyme catalyses (S)-2,3,4,5-tetrahydrodipicolinate + acetyl-CoA + H2O = L-2-acetamido-6-oxoheptanedioate + CoA. It functions in the pathway amino-acid biosynthesis; L-lysine biosynthesis via DAP pathway; LL-2,6-diaminopimelate from (S)-tetrahydrodipicolinate (acetylase route): step 1/3. Catalyzes the transfer of an acetyl group from acetyl-CoA to tetrahydrodipicolinate. This is 2,3,4,5-tetrahydropyridine-2,6-dicarboxylate N-acetyltransferase from Caldanaerobacter subterraneus subsp. tengcongensis (strain DSM 15242 / JCM 11007 / NBRC 100824 / MB4) (Thermoanaerobacter tengcongensis).